Reading from the N-terminus, the 315-residue chain is Protein OPG185 (315 aa).

The first 16 residues, 1–16 (MARLPILLLLISLVYS), serve as a signal peptide directing secretion. The Ig-like V-type domain occupies 17–121 (TPSPQTSKKI…NDTDKVDYEE (105 aa)). The Virion surface segment spans residues 17–279 (TPSPQTSKKI…SNYKTKDFVE (263 aa)). Cys34 and Cys103 are disulfide-bonded. N-linked (GlcNAc...) asparagine; by host glycans are attached at residues Asn37, Asn69, Asn112, and Asn161. Residues 192–202 (INTVSASSGES) are compositionally biased toward polar residues. The interval 192-214 (INTVSASSGESTTDETPEPITDK) is disordered. N-linked (GlcNAc...) asparagine; by host glycosylation is present at Asn254. Residues 280–303 (IFGITALIILSAVAIFCITYYIYN) form a helical membrane-spanning segment. Topologically, residues 304–315 (KRSRKYKTENKV) are intravirion.

This sequence belongs to the orthopoxvirus OPG185 family. Heterodimerizes with OPG040. The heterodimer OPG185-OPG040 interacts with components of the entry fusion complex OPG143 and OPG094. Heterodimer with C3/VPC protein; disulfide-linked. Glycosylated; contains phosphate and sulfate-substituted glycans. O-glycosylation is required for hemagglutination and hemadsorption activities of infected cell membranes.

The protein resides in the virion membrane. Its subcellular location is the host membrane. Its function is as follows. Prevents cell to cell fusion by interacting with and directing the viral OPG040 protein on the host plasma membrane. The OPG185-OPG040 complex associates with components of the entry fusion complex (EFC) presumably to avoid superinfection and syncytium formation. Via its interaction with C3/VCP protein, protects the infected cell and probably also the extracellular enveloped virus from complement attack. In Vaccinia virus (strain Tian Tan) (VACV), this protein is Protein OPG185 (OPG185).